The sequence spans 378 residues: UDP-N-acetylglucosamine--N-acetylmuramyl-(pentapeptide) pyrophosphoryl-undecaprenol N-acetylglucosamine transferase (378 aa).

UDP-N-acetyl-alpha-D-glucosamine is bound by residues 14 to 16 (TGG), N125, R165, S193, and Q293.

The protein belongs to the glycosyltransferase 28 family. MurG subfamily.

It localises to the cell inner membrane. It carries out the reaction di-trans,octa-cis-undecaprenyl diphospho-N-acetyl-alpha-D-muramoyl-L-alanyl-D-glutamyl-meso-2,6-diaminopimeloyl-D-alanyl-D-alanine + UDP-N-acetyl-alpha-D-glucosamine = di-trans,octa-cis-undecaprenyl diphospho-[N-acetyl-alpha-D-glucosaminyl-(1-&gt;4)]-N-acetyl-alpha-D-muramoyl-L-alanyl-D-glutamyl-meso-2,6-diaminopimeloyl-D-alanyl-D-alanine + UDP + H(+). It participates in cell wall biogenesis; peptidoglycan biosynthesis. Functionally, cell wall formation. Catalyzes the transfer of a GlcNAc subunit on undecaprenyl-pyrophosphoryl-MurNAc-pentapeptide (lipid intermediate I) to form undecaprenyl-pyrophosphoryl-MurNAc-(pentapeptide)GlcNAc (lipid intermediate II). The chain is UDP-N-acetylglucosamine--N-acetylmuramyl-(pentapeptide) pyrophosphoryl-undecaprenol N-acetylglucosamine transferase from Bartonella tribocorum (strain CIP 105476 / IBS 506).